Here is a 157-residue protein sequence, read N- to C-terminus: Probable calcium-binding protein CML23 (157 aa).

EF-hand domains are found at residues 11-46 (GSMEDIKKVFQRFDKNNDGKISIDELKDVIGALSPN), 47-82 (ASQEETKAMMKEFDLDGNGFIDLDEFVALFQISDQS), 86-121 (SAIRDLKEAFDLYDLDRNGRISANELHSVMKNLGEK), and 122-157 (CSIQDCQRMINKVDSDGDGCVDFEEFKKMMMINGSA). Residues Asp-24, Asn-26, Asp-28, Lys-30, Glu-35, Asp-60, Asp-62, Asn-64, Glu-71, Asp-99, Asp-101, Asn-103, Arg-105, Glu-110, Asp-135, Asp-137, Asp-139, Cys-141, and Glu-146 each contribute to the Ca(2+) site.

In terms of biological role, potential calcium sensor. This is Probable calcium-binding protein CML23 (CML23) from Arabidopsis thaliana (Mouse-ear cress).